The chain runs to 366 residues: Chorismate synthase (366 aa).

NADP(+)-binding residues include arginine 48 and arginine 54. Residues 125–127 (RSS), 241–242 (NA), glycine 285, 300–304 (KPTSS), and arginine 326 contribute to the FMN site.

This sequence belongs to the chorismate synthase family. In terms of assembly, homotetramer. Requires FMNH2 as cofactor.

It carries out the reaction 5-O-(1-carboxyvinyl)-3-phosphoshikimate = chorismate + phosphate. The protein operates within metabolic intermediate biosynthesis; chorismate biosynthesis; chorismate from D-erythrose 4-phosphate and phosphoenolpyruvate: step 7/7. Catalyzes the anti-1,4-elimination of the C-3 phosphate and the C-6 proR hydrogen from 5-enolpyruvylshikimate-3-phosphate (EPSP) to yield chorismate, which is the branch point compound that serves as the starting substrate for the three terminal pathways of aromatic amino acid biosynthesis. This reaction introduces a second double bond into the aromatic ring system. The sequence is that of Chorismate synthase from Cereibacter sphaeroides (strain ATCC 17023 / DSM 158 / JCM 6121 / CCUG 31486 / LMG 2827 / NBRC 12203 / NCIMB 8253 / ATH 2.4.1.) (Rhodobacter sphaeroides).